The following is a 320-amino-acid chain: Apolipoprotein E (320 aa).

An N-terminal signal peptide occupies residues 1 to 18 (MKVLWAAFLVAFLAGCQG). Tandem repeats lie at residues 82 to 103 (ALMD…EQLS), 104 to 125 (PVAE…ARLG), 126 to 147 (ADME…AMLG), 148 to 169 (QSTD…KRLL), 170 to 191 (RDVD…EGAE), 192 to 213 (RGVS…ARAA), 214 to 236 (TVGS…ERLR), and 237 to 258 (ARME…EQVE). The segment at 82-199 (ALMDETMKEL…AERGVSAIRE (118 aa)) is 8 X 22 AA approximate tandem repeats. At methionine 145 the chain carries Methionine sulfoxide. Serine 149 is modified (phosphoserine). An LDL and other lipoprotein receptors binding region spans residues 160 to 170 (HLRKLRKRLLR). Residue 164-167 (LRKR) participates in heparin binding. Residues 212 to 293 (AATVGSSLAS…SWFEPLVEDM (82 aa)) form a lipid-binding and lipoprotein association region. 232–239 (GERLRARM) is a binding site for heparin. Residues 269-320 (QQMRLQAEAFQARLKSWFEPLVEDMQRQWAGLVEKVQAAVGASATPVPSDNH) form a homooligomerization region. The specificity for association with VLDL stretch occupies residues 281–293 (RLKSWFEPLVEDM).

It belongs to the apolipoprotein A1/A4/E family. In terms of assembly, homotetramer. May interact with ABCA1; functionally associated with ABCA1 in the biogenesis of HDLs. May interact with APP/A4 amyloid-beta peptide; the interaction is extremely stable in vitro but its physiological significance is unclear. May interact with MAPT. May interact with MAP2. In the cerebrospinal fluid, interacts with secreted SORL1. Interacts with PMEL; this allows the loading of PMEL luminal fragment on ILVs to induce fibril nucleation. Post-translationally, APOE exists as multiple glycosylated and sialylated glycoforms within cells and in plasma. The extent of glycosylation and sialylation are tissue and context specific. In terms of processing, glycated in plasma VLDL. Phosphorylated by FAM20C in the extracellular medium.

It localises to the secreted. Its subcellular location is the extracellular space. It is found in the extracellular matrix. The protein resides in the extracellular vesicle. The protein localises to the endosome. It localises to the multivesicular body. In terms of biological role, APOE is an apolipoprotein, a protein associating with lipid particles, that mainly functions in lipoprotein-mediated lipid transport between organs via the plasma and interstitial fluids. APOE is a core component of plasma lipoproteins and is involved in their production, conversion and clearance. Apolipoproteins are amphipathic molecules that interact both with lipids of the lipoprotein particle core and the aqueous environment of the plasma. As such, APOE associates with chylomicrons, chylomicron remnants, very low density lipoproteins (VLDL) and intermediate density lipoproteins (IDL) but shows a preferential binding to high-density lipoproteins (HDL). It also binds a wide range of cellular receptors including the LDL receptor/LDLR, the LDL receptor-related proteins LRP1, LRP2 and LRP8 and the very low-density lipoprotein receptor/VLDLR that mediate the cellular uptake of the APOE-containing lipoprotein particles. Finally, APOE also has a heparin-binding activity and binds heparan-sulfate proteoglycans on the surface of cells, a property that supports the capture and the receptor-mediated uptake of APOE-containing lipoproteins by cells. A main function of APOE is to mediate lipoprotein clearance through the uptake of chylomicrons, VLDLs, and HDLs by hepatocytes. APOE is also involved in the biosynthesis by the liver of VLDLs as well as their uptake by peripheral tissues ensuring the delivery of triglycerides and energy storage in muscle, heart and adipose tissues. By participating in the lipoprotein-mediated distribution of lipids among tissues, APOE plays a critical role in plasma and tissues lipid homeostasis. APOE is also involved in two steps of reverse cholesterol transport, the HDLs-mediated transport of cholesterol from peripheral tissues to the liver, and thereby plays an important role in cholesterol homeostasis. First, it is functionally associated with ABCA1 in the biogenesis of HDLs in tissues. Second, it is enriched in circulating HDLs and mediates their uptake by hepatocytes. APOE also plays an important role in lipid transport in the central nervous system, regulating neuron survival and sprouting. The sequence is that of Apolipoprotein E (APOE) from Saimiri boliviensis boliviensis (Bolivian squirrel monkey).